The primary structure comprises 80 residues: RNA-binding protein Hfq (80 aa).

Positions 9–68 (EPFLNALRKERIPVSIYLVNGIKLQGQIDSFDQFVVLLKNTVSQMVYKHAISTIVPSRPV) constitute a Sm domain.

This sequence belongs to the Hfq family. Homohexamer.

RNA chaperone that binds small regulatory RNA (sRNAs) and mRNAs to facilitate mRNA translational regulation in response to envelope stress, environmental stress and changes in metabolite concentrations. Also binds with high specificity to tRNAs. The protein is RNA-binding protein Hfq of Thioalkalivibrio sulfidiphilus (strain HL-EbGR7).